We begin with the raw amino-acid sequence, 345 residues long: Calcium/calmodulin-dependent protein kinase type 1 (345 aa).

Residues 1 to 23 (MPLFGSKKETAKKSSKKDKDEGK) are disordered. A Protein kinase domain is found at 31-287 (YILKDLLGTG…CKQALGHPWI (257 aa)). ATP is bound by residues 37–45 (LGTGAFSQV) and Lys61. Asp153 (proton acceptor) is an active-site residue. The tract at residues 287–327 (ISGNAASTENIHSSVSEQLKKNFAKSRWRQAYHATAVIRQM) is autoinhibitory domain. The tract at residues 307–328 (KNFAKSRWRQAYHATAVIRQMR) is calmodulin-binding.

This sequence belongs to the protein kinase superfamily. CAMK Ser/Thr protein kinase family. CaMK subfamily. Highly expressed in hepatopancreas and to a lesser extent in gills. Low expression in hemocytes, testis, ovary, heart, eyestalk, muscle and epidermis.

It catalyses the reaction L-seryl-[protein] + ATP = O-phospho-L-seryl-[protein] + ADP + H(+). The catalysed reaction is L-threonyl-[protein] + ATP = O-phospho-L-threonyl-[protein] + ADP + H(+). With respect to regulation, activated by Ca(2+)/calmodulin. Binding of calmodulin results in conformational change that relieves intrasteric autoinhibition. Functionally, calcium/calmodulin-dependent protein kinase that operates in the calcium-triggered CaMKK-CaMK1 signaling cascade and, upon calcium influx, regulates transcription activators activity, cell cycle, hormone production, cell differentiation, actin filament organization and neurite outgrowth. Involved in molting. The sequence is that of Calcium/calmodulin-dependent protein kinase type 1 from Macrobrachium nipponense (Oriental river shrimp).